The primary structure comprises 159 residues: uncharacterized protein (159 aa).

A run of 3 helical transmembrane segments spans residues 16-36 (IVLP…AFIF), 84-104 (VYAG…LLII), and 112-132 (VFFY…LLPV).

It is found in the cell membrane. This is an uncharacterized protein from Bacillus subtilis (strain 168).